Consider the following 302-residue polypeptide: Recombination-associated protein RdgC (302 aa).

The protein belongs to the RdgC family.

The protein localises to the cytoplasm. The protein resides in the nucleoid. May be involved in recombination. The sequence is that of Recombination-associated protein RdgC from Actinobacillus pleuropneumoniae serotype 5b (strain L20).